Reading from the N-terminus, the 106-residue chain is uncharacterized protein (106 aa).

This is an uncharacterized protein from Methanocaldococcus jannaschii (strain ATCC 43067 / DSM 2661 / JAL-1 / JCM 10045 / NBRC 100440) (Methanococcus jannaschii).